The sequence spans 671 residues: DNA ligase (671 aa).

NAD(+) contacts are provided by residues 32–36 (DVEYD), 81–82 (SL), and E114. K116 serves as the catalytic N6-AMP-lysine intermediate. Residues R137, E175, K292, and K316 each contribute to the NAD(+) site. The Zn(2+) site is built by C410, C413, C428, and C434. Residues 592–671 (EKNNYFSGKN…AEFYQILGIR (80 aa)) form the BRCT domain.

Belongs to the NAD-dependent DNA ligase family. LigA subfamily. The cofactor is Mg(2+). Requires Mn(2+) as cofactor.

The catalysed reaction is NAD(+) + (deoxyribonucleotide)n-3'-hydroxyl + 5'-phospho-(deoxyribonucleotide)m = (deoxyribonucleotide)n+m + AMP + beta-nicotinamide D-nucleotide.. Functionally, DNA ligase that catalyzes the formation of phosphodiester linkages between 5'-phosphoryl and 3'-hydroxyl groups in double-stranded DNA using NAD as a coenzyme and as the energy source for the reaction. It is essential for DNA replication and repair of damaged DNA. The chain is DNA ligase from Baumannia cicadellinicola subsp. Homalodisca coagulata.